A 439-amino-acid chain; its full sequence is Eukaryotic translation initiation factor 2 subunit gamma (439 aa).

Residues 11-215 (QATLNIGTIG…FIVNYIPEPV (205 aa)) enclose the tr-type G domain. The tract at residues 20-27 (GHVAHGKS) is G1. Residue 23 to 28 (AHGKST) participates in GTP binding. Residues 48–52 (NITIK) form a G2 region. Residues 103–106 (DCPG) form a G3 region. GTP contacts are provided by residues 159–162 (NKID) and 193–195 (AAQ). The G4 stretch occupies residues 159-162 (NKID). Positions 193-195 (AAQ) are G5. Residues 415–427 (GEIKDGTCIEPEY) are interacts with CDC123.

The protein belongs to the TRAFAC class translation factor GTPase superfamily. Classic translation factor GTPase family. EIF2G subfamily. In terms of assembly, eukaryotic translation initiation factor 2 eIF2 is a heterotrimeric complex composed of an alpha, a beta and a gamma subunit. The factors eIF-1, eIF-2, eIF-3, TIF5/eIF-5 and methionyl-tRNAi form a multifactor complex (MFC) that may bind to the 40S ribosome.

The protein localises to the cytoplasm. It localises to the cytosol. The enzyme catalyses GTP + H2O = GDP + phosphate + H(+). In terms of biological role, as a subunit of eukaryotic initiation factor 2 eIF2, involved in the early steps of protein synthesis. In the presence of GTP, eIF-2 forms a ternary complex with initiator tRNA Met-tRNAi and then recruits the 40S ribosomal complex and initiation factors eIF-1, eIF-1A and eIF-3 to form the 43S pre-initiation complex (43S PIC), a step that determines the rate of protein translation. The 43S PIC binds to mRNA and scans downstream to the initiation codon, where it forms a 48S initiation complex by codon-anticodon base pairing. This leads to the displacement of eIF-1 to allow GTPase-activating protein (GAP) eIF-5-mediated hydrolysis of eIF2-bound GTP. Hydrolysis of GTP and release of Pi, which makes GTP hydrolysis irreversible, causes the release of the eIF-2-GDP binary complex from the 40S subunit, an event that is essential for the subsequent joining of the 60S ribosomal subunit to form an elongation-competent 80S ribosome. In order for eIF-2 to recycle and catalyze another round of initiation, the GDP bound to eIF-2 must be exchanged with GTP by way of a reaction catalyzed by GDP-GTP exchange factor (GEF) eIF-2B. The polypeptide is Eukaryotic translation initiation factor 2 subunit gamma (Encephalitozoon cuniculi (strain GB-M1) (Microsporidian parasite)).